The primary structure comprises 93 residues: UPF0358 protein LMHCC_1561 (93 aa).

The protein belongs to the UPF0358 family.

The chain is UPF0358 protein LMHCC_1561 from Listeria monocytogenes serotype 4a (strain HCC23).